We begin with the raw amino-acid sequence, 353 residues long: Photosystem II D2 protein (353 aa).

Threonine 2 carries the post-translational modification N-acetylthreonine. The residue at position 2 (threonine 2) is a Phosphothreonine. Residues cysteine 41–threonine 61 form a helical membrane-spanning segment. Histidine 118 is a binding site for chlorophyll a. A helical membrane pass occupies residues glycine 125–proline 141. Pheophytin a contacts are provided by glutamine 130 and asparagine 143. A helical transmembrane segment spans residues valine 153–serine 166. Chlorophyll a is bound at residue histidine 198. A helical transmembrane segment spans residues alanine 208–aspartate 228. Residues histidine 215 and phenylalanine 262 each contribute to the a plastoquinone site. Histidine 215 provides a ligand contact to Fe cation. Histidine 269 contacts Fe cation. A helical transmembrane segment spans residues glycine 279–arginine 295.

This sequence belongs to the reaction center PufL/M/PsbA/D family. In terms of assembly, PSII is composed of 1 copy each of membrane proteins PsbA, PsbB, PsbC, PsbD, PsbE, PsbF, PsbH, PsbI, PsbJ, PsbK, PsbL, PsbM, PsbT, PsbX, PsbY, PsbZ, Psb30/Ycf12, at least 3 peripheral proteins of the oxygen-evolving complex and a large number of cofactors. It forms dimeric complexes. The D1/D2 heterodimer binds P680, chlorophylls that are the primary electron donor of PSII, and subsequent electron acceptors. It shares a non-heme iron and each subunit binds pheophytin, quinone, additional chlorophylls, carotenoids and lipids. There is also a Cl(-1) ion associated with D1 and D2, which is required for oxygen evolution. The PSII complex binds additional chlorophylls, carotenoids and specific lipids. is required as a cofactor.

The protein localises to the plastid. The protein resides in the chloroplast thylakoid membrane. It catalyses the reaction 2 a plastoquinone + 4 hnu + 2 H2O = 2 a plastoquinol + O2. Its function is as follows. Photosystem II (PSII) is a light-driven water:plastoquinone oxidoreductase that uses light energy to abstract electrons from H(2)O, generating O(2) and a proton gradient subsequently used for ATP formation. It consists of a core antenna complex that captures photons, and an electron transfer chain that converts photonic excitation into a charge separation. The D1/D2 (PsbA/PsbD) reaction center heterodimer binds P680, the primary electron donor of PSII as well as several subsequent electron acceptors. D2 is needed for assembly of a stable PSII complex. The sequence is that of Photosystem II D2 protein from Solanum bulbocastanum (Wild potato).